Here is a 180-residue protein sequence, read N- to C-terminus: Pro-glucagon (180 aa).

An N-terminal signal peptide occupies residues 1–20; sequence MKTVYIVAGLFVMLVQGSWQ. The tract at residues 23–59 is disordered; it reads PQDTEENARSFPASQTEPLEDPDQINEDKRHSQGTFT. Residue serine 54 is modified to Phosphoserine. The propeptide occupies 84-89; the sequence is NRNNIA. Residues serine 105 and serine 108 each carry the phosphoserine modification. Residue arginine 127 is modified to Arginine amide. Positions 131–145 are excised as a propeptide; that stretch reads DFPEEVAIAEELGRR. Serine 150 and serine 152 each carry phosphoserine.

This sequence belongs to the glucagon family. Post-translationally, proglucagon is post-translationally processed in a tissue-specific manner in pancreatic A cells and intestinal L cells. In pancreatic A cells, the major bioactive hormone is glucagon cleaved by PCSK2/PC2. In the intestinal L cells PCSK1/PC1 liberates GLP-1, GLP-2, glicentin and oxyntomodulin. GLP-1 is further N-terminally truncated by post-translational processing in the intestinal L cells resulting in GLP-1(7-37) GLP-1-(7-36)amide. The C-terminal amidation is neither important for the metabolism of GLP-1 nor for its effects on the endocrine pancreas. Glucagon is secreted in the A cells of the islets of Langerhans. GLP-1, GLP-2, oxyntomodulin and glicentin are secreted from enteroendocrine cells throughout the gastrointestinal tract.

It localises to the secreted. Its function is as follows. Plays a key role in glucose metabolism and homeostasis. Regulates blood glucose by increasing gluconeogenesis and decreasing glycolysis. A counterregulatory hormone of insulin, raises plasma glucose levels in response to insulin-induced hypoglycemia. Plays an important role in initiating and maintaining hyperglycemic conditions in diabetes. Functionally, potent stimulator of glucose-dependent insulin release. Also stimulates insulin release in response to IL6. Plays important roles on gastric motility and the suppression of plasma glucagon levels. May be involved in the suppression of satiety and stimulation of glucose disposal in peripheral tissues, independent of the actions of insulin. Has growth-promoting activities on intestinal epithelium. May also regulate the hypothalamic pituitary axis (HPA) via effects on LH, TSH, CRH, oxytocin, and vasopressin secretion. Increases islet mass through stimulation of islet neogenesis and pancreatic beta cell proliferation. Inhibits beta cell apoptosis. In terms of biological role, stimulates intestinal growth and up-regulates villus height in the small intestine, concomitant with increased crypt cell proliferation and decreased enterocyte apoptosis. The gastrointestinal tract, from the stomach to the colon is the principal target for GLP-2 action. Plays a key role in nutrient homeostasis, enhancing nutrient assimilation through enhanced gastrointestinal function, as well as increasing nutrient disposal. Stimulates intestinal glucose transport and decreases mucosal permeability. May modulate gastric acid secretion and the gastro-pyloro-duodenal activity. May play an important role in intestinal mucosal growth in the early period of life. Its function is as follows. Oxyntomodulin significantly reduces food intake. This is Pro-glucagon (Gcg) from Rattus norvegicus (Rat).